The chain runs to 448 residues: NADP-specific glutamate dehydrogenase (448 aa).

Substrate-binding residues include Lys-88, Gln-109, and Lys-112. Catalysis depends on Lys-124, which acts as the Proton donor. Gly-163 provides a ligand contact to substrate. 2 residues coordinate NADP(+): Thr-207 and Asn-238. Residue Ser-381 coordinates substrate.

The protein belongs to the Glu/Leu/Phe/Val dehydrogenases family. Homohexamer.

The enzyme catalyses L-glutamate + NADP(+) + H2O = 2-oxoglutarate + NH4(+) + NADPH + H(+). Its function is as follows. Catalyzes the reversible oxidative deamination of glutamate to alpha-ketoglutarate and ammonia. The chain is NADP-specific glutamate dehydrogenase (gdhA) from Helicobacter pylori (strain ATCC 700392 / 26695) (Campylobacter pylori).